We begin with the raw amino-acid sequence, 88 residues long: Small ribosomal subunit protein bS20 (88 aa).

The segment at 1–36 is disordered; sequence MANTSSAKKATRKIARRTAVNKSRRTQMRGSVRTVE.

It belongs to the bacterial ribosomal protein bS20 family.

In terms of biological role, binds directly to 16S ribosomal RNA. The chain is Small ribosomal subunit protein bS20 from Rhodopseudomonas palustris (strain HaA2).